A 1774-amino-acid chain; its full sequence is Protein TIC 214 (1774 aa).

Helical transmembrane passes span 19 to 39 (IINS…FSIG), 68 to 88 (FIAG…HLAL), 91 to 111 (PHTI…WNNH), 133 to 153 (VFLN…SSML), 176 to 196 (VGWL…LVWI), and 227 to 247 (IFSI…PSPI). Over residues 254–268 (GTSETEERGGTKQDQ) the composition is skewed to basic and acidic residues. Positions 254–275 (GTSETEERGGTKQDQEVSTEEA) are disordered.

Belongs to the TIC214 family. Part of the Tic complex.

It localises to the plastid. It is found in the chloroplast inner membrane. Functionally, involved in protein precursor import into chloroplasts. May be part of an intermediate translocation complex acting as a protein-conducting channel at the inner envelope. The polypeptide is Protein TIC 214 (Aethionema cordifolium (Lebanon stonecress)).